Here is a 138-residue protein sequence, read N- to C-terminus: Large ribosomal subunit protein uL16 (138 aa).

The segment covering Met-1–Arg-17 has biased composition (basic residues). The interval Met-1–Gly-24 is disordered.

The protein belongs to the universal ribosomal protein uL16 family. As to quaternary structure, part of the 50S ribosomal subunit.

Its function is as follows. Binds 23S rRNA and is also seen to make contacts with the A and possibly P site tRNAs. This is Large ribosomal subunit protein uL16 from Kineococcus radiotolerans (strain ATCC BAA-149 / DSM 14245 / SRS30216).